Consider the following 528-residue polypeptide: Phosphoenolpyruvate carboxykinase (ATP) (528 aa).

Substrate-binding residues include R56, Y192, and K198. Residues K198, H217, and 233 to 241 each bind ATP; that span reads GLSGTGKTT. K198 and H217 together coordinate Mn(2+). Mn(2+) is bound at residue D254. E282, R319, and T444 together coordinate ATP. A substrate-binding site is contributed by R319.

This sequence belongs to the phosphoenolpyruvate carboxykinase (ATP) family. The cofactor is Mn(2+).

It localises to the cytoplasm. The enzyme catalyses oxaloacetate + ATP = phosphoenolpyruvate + ADP + CO2. It functions in the pathway carbohydrate biosynthesis; gluconeogenesis. Its function is as follows. Involved in the gluconeogenesis. Catalyzes the conversion of oxaloacetate (OAA) to phosphoenolpyruvate (PEP) through direct phosphoryl transfer between the nucleoside triphosphate and OAA. The sequence is that of Phosphoenolpyruvate carboxykinase (ATP) from Bacillus cereus (strain B4264).